Reading from the N-terminus, the 288-residue chain is 2-hydroxy-6-oxononadienedioate/2-hydroxy-6-oxononatrienedioate hydrolase (288 aa).

His-267 acts as the Proton acceptor in catalysis.

Belongs to the AB hydrolase superfamily. MhpC family. Homodimer.

The catalysed reaction is (2Z,4E)-2-hydroxy-6-oxonona-2,4-dienedioate + H2O = (2Z)-2-hydroxypenta-2,4-dienoate + succinate + H(+). It catalyses the reaction (2Z,4E,7E)-2-hydroxy-6-oxonona-2,4,7-trienedioate + H2O = (2Z)-2-hydroxypenta-2,4-dienoate + fumarate + H(+). The protein operates within aromatic compound metabolism; 3-phenylpropanoate degradation. Catalyzes the cleavage of the C5-C6 bond of 2-hydroxy-6-oxononadienedioate and 2-hydroxy-6-oxononatrienedioate, a dienol ring fission product of the bacterial meta-cleavage pathway for degradation of phenylpropionic acid. This is 2-hydroxy-6-oxononadienedioate/2-hydroxy-6-oxononatrienedioate hydrolase from Escherichia coli (strain K12 / DH10B).